A 62-amino-acid polypeptide reads, in one-letter code: uncharacterized protein (62 aa).

Residues 15–37 (FSSGVLISNFLLFNFIIISHSSL) form a helical membrane-spanning segment. A compositionally biased stretch (low complexity) spans 41–56 (TTTTTTTTTTTTNTKS). Positions 41-62 (TTTTTTTTTTTTNTKSTLHRSG) are disordered.

The protein resides in the membrane. This is an uncharacterized protein from Dictyostelium discoideum (Social amoeba).